Consider the following 245-residue polypeptide: 1-(5-phosphoribosyl)-5-[(5-phosphoribosylamino)methylideneamino] imidazole-4-carboxamide isomerase (245 aa).

Asp-7 functions as the Proton acceptor in the catalytic mechanism. Asp-129 serves as the catalytic Proton donor.

Belongs to the HisA/HisF family.

It is found in the cytoplasm. It carries out the reaction 1-(5-phospho-beta-D-ribosyl)-5-[(5-phospho-beta-D-ribosylamino)methylideneamino]imidazole-4-carboxamide = 5-[(5-phospho-1-deoxy-D-ribulos-1-ylimino)methylamino]-1-(5-phospho-beta-D-ribosyl)imidazole-4-carboxamide. Its pathway is amino-acid biosynthesis; L-histidine biosynthesis; L-histidine from 5-phospho-alpha-D-ribose 1-diphosphate: step 4/9. The sequence is that of 1-(5-phosphoribosyl)-5-[(5-phosphoribosylamino)methylideneamino] imidazole-4-carboxamide isomerase from Shewanella oneidensis (strain ATCC 700550 / JCM 31522 / CIP 106686 / LMG 19005 / NCIMB 14063 / MR-1).